We begin with the raw amino-acid sequence, 688 residues long: Methionine--tRNA ligase (688 aa).

The 'HIGH' region motif lies at P13–H23. C144, C147, C157, and C160 together coordinate Zn(2+). The 'KMSKS' region motif lies at K342 to S346. Residue K345 participates in ATP binding. Residues D582–H688 form the tRNA-binding domain.

This sequence belongs to the class-I aminoacyl-tRNA synthetase family. MetG type 1 subfamily. As to quaternary structure, homodimer. It depends on Zn(2+) as a cofactor.

It localises to the cytoplasm. It carries out the reaction tRNA(Met) + L-methionine + ATP = L-methionyl-tRNA(Met) + AMP + diphosphate. Its function is as follows. Is required not only for elongation of protein synthesis but also for the initiation of all mRNA translation through initiator tRNA(fMet) aminoacylation. The polypeptide is Methionine--tRNA ligase (Acidovorax sp. (strain JS42)).